Reading from the N-terminus, the 315-residue chain is Indoleacetate decarboxylase activating enzyme (315 aa).

One can recognise a Radical SAM core domain in the interval 21–311; it reads HDGPGIRTNV…ADIIEAHGVK (291 aa). Cys-35, Cys-39, Cys-42, Cys-61, Cys-64, Cys-67, Cys-71, Cys-98, Cys-101, Cys-106, and Cys-110 together coordinate [4Fe-4S] cluster. 4Fe-4S ferredoxin-type domains lie at 52–81 and 89–120; these read PQLL…AITD and GYVH…IAGE. S-adenosyl-L-methionine is bound by residues Gly-149, 198-200, and His-271; that span reads DCK.

The protein belongs to the organic radical-activating enzymes family. The cofactor is [4Fe-4S] cluster.

The enzyme catalyses glycyl-[protein] + reduced [flavodoxin] + S-adenosyl-L-methionine = glycin-2-yl radical-[protein] + semiquinone [flavodoxin] + 5'-deoxyadenosine + L-methionine + H(+). In terms of biological role, catalyzes activation of the indoleacetate decarboxylase OsIAD under anaerobic conditions by generation of an organic free radical on a glycine residue, via a homolytic cleavage of S-adenosyl-L-methionine (SAM). This chain is Indoleacetate decarboxylase activating enzyme, found in Tractidigestivibacter scatoligenes (Olsenella scatoligenes).